The sequence spans 435 residues: Phosphomethylpyrimidine synthase (435 aa).

Substrate is bound by residues Asn67, Met96, Tyr125, His163, 185 to 187, 226 to 229, and Glu265; these read SRG and DGLR. His269 lines the Zn(2+) pocket. Tyr292 provides a ligand contact to substrate. His333 contacts Zn(2+). Positions 408, 411, and 415 each coordinate [4Fe-4S] cluster.

This sequence belongs to the ThiC family. Requires [4Fe-4S] cluster as cofactor.

It catalyses the reaction 5-amino-1-(5-phospho-beta-D-ribosyl)imidazole + S-adenosyl-L-methionine = 4-amino-2-methyl-5-(phosphooxymethyl)pyrimidine + CO + 5'-deoxyadenosine + formate + L-methionine + 3 H(+). It functions in the pathway cofactor biosynthesis; thiamine diphosphate biosynthesis. Functionally, catalyzes the synthesis of the hydroxymethylpyrimidine phosphate (HMP-P) moiety of thiamine from aminoimidazole ribotide (AIR) in a radical S-adenosyl-L-methionine (SAM)-dependent reaction. This is Phosphomethylpyrimidine synthase from Thermus thermophilus (strain ATCC 27634 / DSM 579 / HB8).